A 593-amino-acid polypeptide reads, in one-letter code: MIQALLVIICLAVFPHQGSSIILESGNVNDYEVVYPQKVPALLKGGVQNPQPETKYEDTMRYEFQVNGEPVVLHLERNKGLFSEDYTETHYAPDGREITTSPPVQDHCYYHGYIQNEADSSAVISACDGLKGHFEHQGETYFIEPLKISNSEAHAIYKDENVENEDETPEICGVTETTWESDESIEKTSQFTNTPEQDRYLQDKKYIEFYVIVDNRMYRYYNNDKPAIKIRVYEMINAVNTKFRPLKIHIALIGLEIWSNKDKFEVKPAASVTLKSFGEWRETVLLPRKRNDNAQLLTGIDFNGNTVGRAYIGSLCKTNESVAIVQDYNRRISLVASTITHELGHNLGIHHDKASCICIPGPCIMLKKRTAPAFQFSSCSIREYREYLLRDRPQCILNKPLSTDIVSPPICGNYFVEVGEECDCGSPQACQSACCNAATCQFKGAETECRVAKDDCDLPELCTGQSAECPTDSLQRNGHPCQNNQSYCYNGTCPTLTNQCITLLGPHFTVSPKGCFDLNMRGDDGSFCRMEDGTKIPCAAKDVKCGRLYCTEKNTMSCLIPPNPDGIMAEPGTKCGDGMVCSKGQCVDVQTAY.

A signal peptide spans Met-1–Ser-20. A propeptide spanning residues Ile-21–Glu-196 is cleaved from the precursor. Positions Lys-205–Pro-400 constitute a Peptidase M12B domain. Ca(2+) contacts are provided by Glu-208 and Asp-292. 3 disulfides stabilise this stretch: Cys-316–Cys-395, Cys-356–Cys-379, and Cys-358–Cys-363. An N-linked (GlcNAc...) asparagine glycan is attached at Asn-319. Residues His-341, His-345, and His-351 each coordinate Zn(2+). 8 residues coordinate Ca(2+): Cys-395, Asn-398, Ile-410, Asn-413, Phe-415, Glu-417, Glu-420, and Asp-423. The region spanning Pro-408–Asn-477 is the Disintegrin domain. 12 disulfide bridges follow: Cys-411–Cys-440, Cys-422–Cys-435, Cys-424–Cys-430, Cys-434–Cys-462, Cys-449–Cys-469, Cys-456–Cys-488, Cys-481–Cys-493, Cys-500–Cys-550, Cys-515–Cys-558, Cys-528–Cys-538, Cys-545–Cys-581, and Cys-575–Cys-586. The D/ECD-tripeptide signature appears at Asp-455–Asp-457. Ca(2+)-binding residues include Asp-457, Leu-458, Glu-460, Asp-472, and Ser-473. The N-linked (GlcNAc...) asparagine glycan is linked to Asn-490.

Belongs to the venom metalloproteinase (M12B) family. P-III subfamily. P-IIIa sub-subfamily. As to quaternary structure, monomer. Requires Zn(2+) as cofactor. In terms of tissue distribution, expressed by the venom gland.

It is found in the secreted. Snake venom zinc metalloproteinase that cleaves the membrane-bound precursor of TNF-alpha (TNF) into its mature soluble form showing the same digestion pattern than ADAM17. This is Zinc metalloproteinase-disintegrin-like kaouthiagin-like from Naja atra (Chinese cobra).